The sequence spans 349 residues: tRNA pseudouridine synthase D (349 aa).

Phe-27 is a binding site for substrate. The Nucleophile role is filled by Asp-80. Asn-129 serves as a coordination point for substrate. Positions 155 to 303 constitute a TRUD domain; it reads GVPNYFGAQR…VEAARRAMLL (149 aa). Phe-329 contacts substrate.

It belongs to the pseudouridine synthase TruD family.

The enzyme catalyses uridine(13) in tRNA = pseudouridine(13) in tRNA. Responsible for synthesis of pseudouridine from uracil-13 in transfer RNAs. This Shigella dysenteriae serotype 1 (strain Sd197) protein is tRNA pseudouridine synthase D.